The primary structure comprises 208 residues: Protein TIC 20-II, chloroplastic (208 aa).

The N-terminal 49 residues, 1 to 49, are a transit peptide targeting the chloroplast; that stretch reads MASLCLSLHQTLTNPLSAPRCRPLSLSFPGSSTFSIRPSSRRATALTTR. Transmembrane regions (helical) follow at residues 61–83, 101–121, 134–154, and 172–192; these read VISIASYALPFFNSLQYGRFLFA, LYRSVPYASFVAFFGLYLGVV, AMQAVTLDVLLAVPVLLTRIL, and TGVFVFSFMCFVYGVVSSLLG.

Belongs to the Tic20 family. In terms of assembly, part of the Tic complex. Expressed in leaves, siliques and roots.

The protein resides in the plastid. Its subcellular location is the chloroplast inner membrane. Functionally, may be involved in protein precursor import into chloroplasts. Not redundant with TIC20-I, TIC20-IV or TIC20-V. In Arabidopsis thaliana (Mouse-ear cress), this protein is Protein TIC 20-II, chloroplastic (TIC20-II).